The sequence spans 236 residues: Phosphoribosylaminoimidazole-succinocarboxamide synthase (236 aa).

This sequence belongs to the SAICAR synthetase family.

The enzyme catalyses 5-amino-1-(5-phospho-D-ribosyl)imidazole-4-carboxylate + L-aspartate + ATP = (2S)-2-[5-amino-1-(5-phospho-beta-D-ribosyl)imidazole-4-carboxamido]succinate + ADP + phosphate + 2 H(+). Its pathway is purine metabolism; IMP biosynthesis via de novo pathway; 5-amino-1-(5-phospho-D-ribosyl)imidazole-4-carboxamide from 5-amino-1-(5-phospho-D-ribosyl)imidazole-4-carboxylate: step 1/2. The protein is Phosphoribosylaminoimidazole-succinocarboxamide synthase of Rickettsia bellii (strain OSU 85-389).